The primary structure comprises 468 residues: Trehalose-binding lipoprotein LpqY (468 aa).

An N-terminal signal peptide occupies residues 1 to 25; it reads MVMSRGRIPRLGAAVLVALTTAAAA. Cys26 carries N-palmitoyl cysteine lipidation. A lipid anchor (S-diacylglycerol cysteine) is attached at Cys26. A disulfide bridge links Cys54 with Cys372. Alpha,alpha-trehalose contacts are provided by Asp97, Asn151, Trp276, Phe278, Gly351, and Arg421.

Belongs to the bacterial solute-binding protein 1 family. In terms of assembly, monomer. The complex is composed of two ATP-binding proteins (SugC), two transmembrane proteins (SugA and SugB) and a solute-binding protein (LpqY).

The protein resides in the cell inner membrane. Part of the ABC transporter complex LpqY-SugA-SugB-SugC, which is highly specific for uptake of trehalose. Involved in the recycling of extracellular trehalose released from trehalose-containing molecules synthesized by M.tuberculosis. Trehalose uptake is essential for virulence. The chain is Trehalose-binding lipoprotein LpqY (lpqY) from Mycobacterium tuberculosis (strain CDC 1551 / Oshkosh).